Consider the following 571-residue polypeptide: Glutamine--tRNA ligase (571 aa).

The 'HIGH' region signature appears at Pro35–His45. Residues Glu36–Asn38 and His42–Ser48 contribute to the ATP site. The L-glutamine site is built by Asp68 and Tyr213. ATP is bound by residues Thr232, Arg262–Leu263, and Leu270–Lys272. The short motif at Ile269–Arg273 is the 'KMSKS' region element.

This sequence belongs to the class-I aminoacyl-tRNA synthetase family. Monomer.

Its subcellular location is the cytoplasm. The enzyme catalyses tRNA(Gln) + L-glutamine + ATP = L-glutaminyl-tRNA(Gln) + AMP + diphosphate. This chain is Glutamine--tRNA ligase, found in Buchnera aphidicola subsp. Acyrthosiphon pisum (strain 5A).